A 505-amino-acid chain; its full sequence is MAQVINTNSLSLLTQNNLNKSQSSLSSAIERLSSGLRINSAKDDAAGQAIANRFTSNIKGLTQASRNANDGISIAQTTEGALNEINNNLQRVRELSVQATNGTNSDSDLKSIQDEIQQRLEEIDRVSNQTQFNGVKVLSQDNQMKIQVGANDGETITIDLQKIDVKSLGLDGFNVNGPKEATVGDLKSSFKNVTGYDTYAAGADKYRVDINSGAVVTDAAAPDKVYVNAANGQLTTDDAENNTAVDLFKTTKSTAGTAEAKAIAGAIKGGKEGDTFDYKGVTFTIDTKTGDGGNGKVSTTINGEKVTLTVADIATGATNVNAATLQSSKNVYTSVVNGQFTFDDKTKNESAKLSDLEANNAVKGESKITVNGAEYTANATGDKITLAGKTMFIDKTASGVSTLINEDAAAAKKSTANPLASIDSALSKVDAVRSSLGAIQNRFDSAITNLGNTVTNLNSARSRIEDADYATEVSNMSKAQILQQAGTSVLAQANQVPQNVLSLLR.

This sequence belongs to the bacterial flagellin family.

It localises to the secreted. It is found in the bacterial flagellum. Functionally, flagellin is the subunit protein which polymerizes to form the filaments of bacterial flagella. This is Flagellin (fliC) from Salmonella moscow.